The chain runs to 767 residues: MTPPPPSPLLGTQVKEDRADYKEFQDFSSLPDTHNIAWDHSFYPFQEEEEHGVKGVESVLEKGVLDEGVLEAWGCCRRCRHAGWNRSQPSPELAGAVIHARAPAVGCRQRSGHLHVRLKQRLLERPCQEPLGKKYQLELPPLYERARKPEGSKNLPADGQGLRAVRADAALPVWPGGPGRPGPHAPEAGAEGQHQGQWPPADTRHLRTPKWPYKVATEEKPEAEEAEKKRQAKVQEKRLPPWKKRTLNQVHRVPWGQHRACQVMLLVSTKQLQRYLHFEKPAKPANMGQDPDCFGKSEGELATCLCGGESVVGETEAPGVRPDPRPEKDAKPAVSGCQEESWLQSEYDEMHPREEMNVPSLRSGSGCQVSGSPLAKGLHPLQPCHPHYMMWECCLFTLTLGTQACFEVCARRLKLAHFCPDTSLWSCGGQSPPVLCQLLDIISVSRDKVIGSHEKKPSSNPNQDDFHSSEYAYRCGIAEAVGLPSIPVHPIGYYDAEKLLEYESLLLQVSEPVNPELSAGPITGLLDRLSGFRDHGPPGSSCRSQRKGNGVETKDQAHRNRDPRGFQGGVLTARLFKMQVSLELFCGHQEHYLTRPVLAPGYPVHLGKAGTHWEQGPNMPTPEQHGTWGNRHLFAVLPLLFYTSLEIMSIGYSVVMAGRNVWQPTKGQMPHQPEQSCQTLALPMTIRHSWEGGAIRESSGWVSWKCHLKATEASQNPCVRATALRVGCSAVTYGVLGQAQGSAPWTSAFKTFSAGIAGLERHAWETM.

Disordered regions lie at residues 171–209 (LPVWPGGPGRPGPHAPEAGAEGQHQGQWPPADTRHLRTP), 314–340 (ETEAPGVRPDPRPEKDAKPAVSGCQEE), and 533–566 (RDHGPPGSSCRSQRKGNGVETKDQAHRNRDPRGF). Basic and acidic residues-rich tracts occupy residues 322 to 331 (PDPRPEKDAK) and 552 to 564 (ETKDQAHRNRDPR).

This is an uncharacterized protein from Homo sapiens (Human).